A 106-amino-acid polypeptide reads, in one-letter code: Large ribosomal subunit protein eL42 (106 aa).

It belongs to the eukaryotic ribosomal protein eL42 family. In terms of assembly, component of the large ribosomal subunit.

It is found in the cytoplasm. Functionally, component of the large ribosomal subunit. The ribosome is a large ribonucleoprotein complex responsible for the synthesis of proteins in the cell. This is Large ribosomal subunit protein eL42 (RPL36A) from Papio anubis (Olive baboon).